The primary structure comprises 122 residues: Large ribosomal subunit protein uL14c (122 aa).

The protein belongs to the universal ribosomal protein uL14 family. Part of the 50S ribosomal subunit.

It localises to the plastid. The protein localises to the chloroplast. Binds to 23S rRNA. The protein is Large ribosomal subunit protein uL14c of Welwitschia mirabilis (Tree tumbo).